A 600-amino-acid chain; its full sequence is Pyranose dehydrogenase 2 (600 aa).

A signal peptide spans 1 to 25 (MLSRVAKLNSRLVSLALLGSQIAFG). Residues N99 and N114 are each glycosylated (N-linked (GlcNAc...) asparagine). H127 is subject to Tele-8alpha-FAD histidine. N199, N275, and N342 each carry an N-linked (GlcNAc...) asparagine glycan. The Proton acceptor role is filled by H535. The active site involves H579.

The protein belongs to the GMC oxidoreductase family. Monomer. It depends on FAD as a cofactor. Post-translationally, N-glycosylated.

It localises to the secreted. The catalysed reaction is pyranose + acceptor = pyranos-2-ulose + reduced acceptor.. The enzyme catalyses pyranose + acceptor = pyranos-3-ulose + reduced acceptor.. It carries out the reaction pyranose + acceptor = pyranos-2,3-diulose + reduced acceptor.. It catalyses the reaction a pyranoside + acceptor = a pyranosid-3-ulose + reduced acceptor.. The catalysed reaction is a pyranoside + acceptor = a pyranosid-3,4-diulose + reduced acceptor.. Its function is as follows. Catalyzes the single-oxidation or sequential double oxidation reaction of carbohydrates primarily at carbon-2 and/or carbon-3 with the concomitant reduction of the flavin. The enzyme exhibits a broad sugar substrate specificity, oxidizing different aldopyranoses to the corresponding C-1, C-2, C-3 or C-1,2, C-2,3 and C-3,4 (di)dehydro sugars with substrate-specific regioselectivity. Accepts only a narrow range of electron acceptors such as substituted benzoquinones and complexed metal ions and reacts extremely slowly with O(2) as acceptor. May play a role in the natural recycling of plant matter by oxidizing all major monosaccharides in lignocellulose and by reducing quinone compounds or reactive radical species generated during lignin depolymerization. In Leucoagaricus meleagris (Western flat-topped agaric), this protein is Pyranose dehydrogenase 2.